The sequence spans 109 residues: Encapsulin nanocompartment cargo protein EncD (109 aa).

Glu47 is a binding site for Fe cation. Positions 61–94 are disordered; the sequence is AGGRGAAAPTPAREAPAEAPRLARGSADELHEAA. Residues 66–85 are compositionally biased toward low complexity; sequence AAAPTPAREAPAEAPRLARG. Residues 100–106 form a probable targeting peptide region; sequence LTVGSLR.

The protein resides in the encapsulin nanocompartment. In terms of biological role, cargo protein of a type 1 encapsulin nanocompartment. May help nucleate Fe atoms in the interior of the encapsulin nanocompartment. Present in about 47 copies/encapsulin nanocompartment. The chain is Encapsulin nanocompartment cargo protein EncD from Myxococcus xanthus (strain DK1622).